Consider the following 396-residue polypeptide: MACAGLLTVCLLRPPAPQPQPQTPRHPQLAPDPGPAGHTLFQDVFRRADKNDDGKLSFEEFQNYFADGVLSLGELQELFSGIDGHLTDNLETEKLCDYFSEHLGVYRPVLAALESLNRAVLAAMDATKLEYERASKVDQFVTRFLLRETVSQLQALQSSLEGASDTLEAQAHGWRSDAESVEAQSRLCGSRRAGRRALRSVSRSSTWSPGSSDTGRSSEAEMQWRLQVNRLQELIDQLECKVRAVGPGPHKGGPSWYPPEPGPCWRPGPHSVPSQAPRLEPLREEDLAKGPDLHILMAQRQVQVAEEGLQDFHRALRCYVDFTGAQSHCLHVSAQKMLDGASFTLYEFWQDEASWRRHQQSPGSKAFQRILIDHLRAPDTLTTVFFPASWWIMNNN.

Residues 14–34 are compositionally biased toward pro residues; sequence PPAPQPQPQTPRHPQLAPDPG. The tract at residues 14–36 is disordered; the sequence is PPAPQPQPQTPRHPQLAPDPGPA. The 36-residue stretch at 36–71 folds into the EF-hand domain; that stretch reads AGHTLFQDVFRRADKNDDGKLSFEEFQNYFADGVLS. Residues D49, N51, D53, K55, and E60 each coordinate Ca(2+). A required for interaction with APBA3 region spans residues 181–190; the sequence is VEAQSRLCGS. Residues 197 to 220 are disordered; the sequence is ALRSVSRSSTWSPGSSDTGRSSEA. A compositionally biased stretch (polar residues) spans 206–217; that stretch reads TWSPGSSDTGRS. Residues 296–385 enclose the ABM domain; sequence LMAQRQVQVA…RAPDTLTTVF (90 aa).

As to quaternary structure, interacts with the N-terminal domain of APBA2. Interacts with NEK2. Interacts with APBA3; APBA3 seems to mediate the interaction between NECAB3 and HIF1AN. Phosphorylated by NEK2. Strongly expressed in heart and skeletal muscle, moderately in brain and pancreas.

The protein resides in the golgi apparatus. Functionally, inhibits the interaction of APBA2 with amyloid-beta precursor protein (APP), and hence allows formation of amyloid-beta. May enhance the activity of HIF1A and thus promote glycolysis under normoxic conditions; the function requires its ABM domain and may implicate the stabilization of the interaction between HIF1AN and APBA3. This chain is N-terminal EF-hand calcium-binding protein 3 (NECAB3), found in Homo sapiens (Human).